A 1250-amino-acid polypeptide reads, in one-letter code: SRC kinase signaling inhibitor 1 (1250 aa).

Positions 19-45 (AEGRARSPREEVGPRDPGGRGEPDPER) are enriched in basic and acidic residues. The segment at 19-78 (AEGRARSPREEVGPRDPGGRGEPDPERSSPPMLSADDAEYPREYRTLGGGGGGGSGGRRF) is disordered. Serine 47 and serine 52 each carry phosphoserine. The segment covering 65 to 75 (LGGGGGGGSGG) has biased composition (gly residues). At serine 79 the chain carries Phosphoserine. Threonine 86 carries the post-translational modification Phosphothreonine. A phosphoserine mark is found at serine 87, serine 98, serine 211, serine 233, serine 237, serine 247, and serine 293. Tyrosine 309 carries the phosphotyrosine modification. A disordered region spans residues 352–448 (ASRESSPTRR…RRDVKPDEDL (97 aa)). Positions 354–364 (RESSPTRRLNN) are enriched in polar residues. Positions 365–374 (LSPASHLASS) are enriched in low complexity. Residues serine 366, serine 375, and serine 392 each carry the phosphoserine modification. Positions 381–399 (PSGLPSGLPSGSPSRSRLS) are enriched in low complexity. 2 positions are modified to omega-N-methylarginine: arginine 397 and arginine 404. Phosphoserine occurs at positions 411, 430, and 432. Residues 437-448 (LERRDVKPDEDL) are compositionally biased toward basic and acidic residues. Residue tyrosine 464 is modified to Phosphotyrosine. The disordered stretch occupies residues 538 to 710 (PSSPQKLADV…ASSTPAGQPT (173 aa)). Residues 552–563 (GGPPPPHSPYSG) show a composition bias toward pro residues. Residues serine 559, serine 562, and serine 566 each carry the phosphoserine modification. Position 567 is an omega-N-methylarginine (arginine 567). 5 positions are modified to phosphoserine: serine 569, serine 579, serine 581, serine 583, and serine 588. Over residues 590–607 (GGKARSTGSASTAGAPPS) the composition is skewed to low complexity. Residues 628-640 (KDTETRERMEAME) are compositionally biased toward basic and acidic residues. Phosphoserine occurs at positions 664 and 688. 2 positions are modified to phosphothreonine: threonine 691 and threonine 704. A compositionally biased stretch (low complexity) spans 701 to 710 (ASSTPAGQPT). 2 coiled-coil regions span residues 712–753 (VSRL…RALL) and 793–813 (EELI…IQRD). Positions 714 to 764 (RLQMQLHLRGLQNSASDLRGQLQQLRNVQLQNQESVRALLKPTEADVSMRV) are interaction with SNAP25. Residues serine 911 and serine 933 each carry the phosphoserine modification. Disordered stretches follow at residues 924–982 (GLDF…ERDW) and 1016–1094 (DCAS…TGEV). Threonine 951 carries the phosphothreonine modification. The residue at position 1054 (serine 1054) is a Phosphoserine. Over residues 1069 to 1078 (KSPPPPPPRR) the composition is skewed to pro residues. 2 positions are modified to phosphoserine: serine 1110 and serine 1127. The tract at residues 1155–1250 (ELESGGSSVP…FGARNSSISF (96 aa)) is disordered. Positions 1217–1250 (PNETSSPGSEKPSGSRTSIPVLTSFGARNSSISF) are enriched in polar residues.

This sequence belongs to the SRCIN1 family. Interacts with the N-terminal coiled-coil region of SNAP25. Interacts with BCAR1/p130Cas and SRC through its C-terminal domain. Interacts with CSK, CTTN, SORBS3/vinexin, SYP and MAPRE3/EB3. Tyrosine-phosphorylated in response to EGF and to cell adhesion to integrin ligands. Expressed predominantly in central nervous system with high levels detected in cortex, cerebellum, midbrain and spinal cord (at protein level). Also expressed in testis and epithelial-rich tissues such as mammary gland, lung and kidney.

The protein localises to the cytoplasm. It is found in the cytoskeleton. It localises to the cell projection. Its subcellular location is the axon. The protein resides in the dendrite. The protein localises to the presynapse. It is found in the postsynapse. It localises to the postsynaptic density. Acts as a negative regulator of SRC by activating CSK which inhibits SRC activity and downstream signaling, leading to impaired cell spreading and migration. Regulates dendritic spine morphology. Involved in calcium-dependent exocytosis. May play a role in neurotransmitter release or synapse maintenance. This Mus musculus (Mouse) protein is SRC kinase signaling inhibitor 1 (Srcin1).